A 306-amino-acid chain; its full sequence is Armadillo repeat-containing protein 10 (306 aa).

The chain crosses the membrane as a helical span at residues 7–29 (VGWVAAGLVLGAGACYCIYRLTR). At S43 the chain carries Phosphoserine. Position 48 is a phosphothreonine (T48). An ARM repeat occupies 101-143 (GGIPIVGNKINSLNQSIKEKALNALNNLSVNVENQTKIKIYVP).

In terms of assembly, interacts with the DNA-binding domain of p53/TP53.

It is found in the endoplasmic reticulum membrane. Its subcellular location is the mitochondrion outer membrane. May play a role in cell survival and cell growth. May suppress the transcriptional activity of p53/TP53. In Mus musculus (Mouse), this protein is Armadillo repeat-containing protein 10 (Armc10).